We begin with the raw amino-acid sequence, 483 residues long: MEGGLDTDASVHNNPLLQLDYEPAFASLGDDYYDLVAAAPFPEHRLRFRGDGVLRLLGLDPATVGEEHFIEAFGRFAGRGPFLAMRYHGYQFGEYNPYLGDGRGFLYGQVRGLDGELYDFGTKGSGTTPYSRGGDGRLTLKGGVREVLASEALHHLGVRTSRSLSLIETGEALWRGDEPSPTRSAVLVRTSRSHVRFGTFERLHHFKRKDLIQKLLDYVIAVYYPHYGAEPERYALFYRELVGRTAELAAQWMAVGFTHAVLNTDNMSITAESFDYGPYAFIDRFDPGFTAAYFDHYGRYSYGNQPLVCRINLEALQLPLSMVIPIADLEAGLAIFDTHYAAHYTARMLAKLGFGALGPVLGPELVKATLNYLEAAQAGYHGFFQALAASFDRSWQSDQGAIPAPVVGAPEAFELWRESYFRALASLSDSELLRVGERLNRHNPTTVLLRPAIEAVWAAIDQNDDWQPFYDLIGRLRKPYAIA.

8 residues coordinate ATP: Gly100, Gly102, Arg103, Lys123, Asp135, Gly136, Arg189, and Arg196. The active-site Proton acceptor is the Asp265. Asn266 and Asp275 together coordinate Mg(2+). Residue Asp275 coordinates ATP.

Belongs to the SELO family. Mg(2+) serves as cofactor. Requires Mn(2+) as cofactor.

It catalyses the reaction L-seryl-[protein] + ATP = 3-O-(5'-adenylyl)-L-seryl-[protein] + diphosphate. The enzyme catalyses L-threonyl-[protein] + ATP = 3-O-(5'-adenylyl)-L-threonyl-[protein] + diphosphate. It carries out the reaction L-tyrosyl-[protein] + ATP = O-(5'-adenylyl)-L-tyrosyl-[protein] + diphosphate. The catalysed reaction is L-histidyl-[protein] + UTP = N(tele)-(5'-uridylyl)-L-histidyl-[protein] + diphosphate. It catalyses the reaction L-seryl-[protein] + UTP = O-(5'-uridylyl)-L-seryl-[protein] + diphosphate. The enzyme catalyses L-tyrosyl-[protein] + UTP = O-(5'-uridylyl)-L-tyrosyl-[protein] + diphosphate. Functionally, nucleotidyltransferase involved in the post-translational modification of proteins. It can catalyze the addition of adenosine monophosphate (AMP) or uridine monophosphate (UMP) to a protein, resulting in modifications known as AMPylation and UMPylation. The chain is Protein nucleotidyltransferase YdiU from Gloeobacter violaceus (strain ATCC 29082 / PCC 7421).